The sequence spans 418 residues: Putative ion-transport protein YfeO (418 aa).

The next 12 helical transmembrane spans lie at 10 to 30 (LLLS…LIVV), 54 to 74 (DSPL…GLVI), 99 to 119 (ALPG…SLGP), 120 to 140 (EHPI…RLLP), 149 to 169 (ILAS…AALI), 186 to 206 (LFAP…FFHP), 223 to 243 (ILSG…AVWC), 258 to 278 (VLVL…GGPV), 300 to 320 (DYFL…ASGF), 322 to 342 (GGRI…LHEH), 343 to 363 (VPAV…VLVV), and 371 to 391 (LFMA…CIVM).

Belongs to the chloride channel (TC 2.A.49) family.

It localises to the cell membrane. This is Putative ion-transport protein YfeO from Shigella boydii serotype 18 (strain CDC 3083-94 / BS512).